Here is a 226-residue protein sequence, read N- to C-terminus: NEDD8-specific protease 1 (226 aa).

The protein belongs to the peptidase C48 family.

Its function is as follows. Processes the pre-form of the ubiquitin-like protein NEDD8/RUB1. Has the capacity to discriminate between NEDD8/RUB1 and ubiquitin. Has no SUMO protease activity. The polypeptide is NEDD8-specific protease 1 (NEDP1) (Arabidopsis thaliana (Mouse-ear cress)).